Consider the following 106-residue polypeptide: Hydrogenase expression/formation protein HoxL (106 aa).

Belongs to the HupF/HypC family.

The protein is Hydrogenase expression/formation protein HoxL (hoxL) of Azotobacter vinelandii.